The primary structure comprises 365 residues: DNA replication and repair protein RecF (365 aa).

30-37 contributes to the ATP binding site; that stretch reads GLNGSGKT.

Belongs to the RecF family.

It is found in the cytoplasm. The RecF protein is involved in DNA metabolism; it is required for DNA replication and normal SOS inducibility. RecF binds preferentially to single-stranded, linear DNA. It also seems to bind ATP. The protein is DNA replication and repair protein RecF of Cellvibrio japonicus (strain Ueda107) (Pseudomonas fluorescens subsp. cellulosa).